We begin with the raw amino-acid sequence, 345 residues long: UPF0324 membrane protein Cgl0015/cg0018 (345 aa).

A run of 10 helical transmembrane segments spans residues 15–37 (LRTG…VLIA), 44–66 (FSGV…LIQL), 81–103 (LLRL…SLGF), 105–124 (MLAV…ILMG), 134–156 (VLLI…EGVT), 163–185 (VVTA…PFAT), 205–227 (EIAQ…AVVV), 261–280 (VVPL…STVA), 285–307 (VIAA…LGCG), and 320–342 (PFIL…TLLT).

Belongs to the UPF0324 family.

It localises to the cell membrane. This chain is UPF0324 membrane protein Cgl0015/cg0018, found in Corynebacterium glutamicum (strain ATCC 13032 / DSM 20300 / JCM 1318 / BCRC 11384 / CCUG 27702 / LMG 3730 / NBRC 12168 / NCIMB 10025 / NRRL B-2784 / 534).